Reading from the N-terminus, the 427-residue chain is Glutamate-1-semialdehyde 2,1-aminomutase (427 aa).

At Lys-265 the chain carries N6-(pyridoxal phosphate)lysine.

It belongs to the class-III pyridoxal-phosphate-dependent aminotransferase family. HemL subfamily. As to quaternary structure, homodimer. It depends on pyridoxal 5'-phosphate as a cofactor.

Its subcellular location is the cytoplasm. The enzyme catalyses (S)-4-amino-5-oxopentanoate = 5-aminolevulinate. It functions in the pathway porphyrin-containing compound metabolism; protoporphyrin-IX biosynthesis; 5-aminolevulinate from L-glutamyl-tRNA(Glu): step 2/2. The protein is Glutamate-1-semialdehyde 2,1-aminomutase of Pseudomonas syringae pv. tomato (strain ATCC BAA-871 / DC3000).